The sequence spans 676 residues: A-type ATP synthase subunit I (676 aa).

8 consecutive transmembrane segments (helical) span residues 341 to 361, 390 to 410, 449 to 469, 490 to 510, 538 to 558, 564 to 584, 590 to 610, and 617 to 637; these read VFIAIFFPIFFGMMLGDIGYG, AGVMSIIFGFIYGECFGPFIV, ILLFATIVIGIAKILFGFALG, IIGVLGLAMIIFGFAYNVGVF, LNVYYLAALPLLVVWFILFVM, MGAMGVILAVELLTWFGQIMS, AIGLSSVYIAFVINFIGMKLI, and IPIVGAIVLLIGHVGNLILGI.

The protein belongs to the V-ATPase 116 kDa subunit family. In terms of assembly, has multiple subunits with at least A(3), B(3), C, D, E, F, H, I and proteolipid K(x).

The protein resides in the cell membrane. Functionally, component of the A-type ATP synthase that produces ATP from ADP in the presence of a proton gradient across the membrane. This chain is A-type ATP synthase subunit I, found in Archaeoglobus fulgidus (strain ATCC 49558 / DSM 4304 / JCM 9628 / NBRC 100126 / VC-16).